The primary structure comprises 192 residues: uncharacterized protein (192 aa).

The disordered stretch occupies residues 168-192 (PLWRKSEAGSRKARTSNSGGPTKRA). A compositionally biased stretch (polar residues) spans 182–192 (TSNSGGPTKRA).

The protein to A.xylinum IS1268 ORFA.

This is an uncharacterized protein from Sinorhizobium fredii (strain NBRC 101917 / NGR234).